The sequence spans 101 residues: Small ribosomal subunit protein uS14 (101 aa).

This sequence belongs to the universal ribosomal protein uS14 family. In terms of assembly, part of the 30S ribosomal subunit. Contacts proteins S3 and S10.

Its function is as follows. Binds 16S rRNA, required for the assembly of 30S particles and may also be responsible for determining the conformation of the 16S rRNA at the A site. The protein is Small ribosomal subunit protein uS14 of Chromobacterium violaceum (strain ATCC 12472 / DSM 30191 / JCM 1249 / CCUG 213 / NBRC 12614 / NCIMB 9131 / NCTC 9757 / MK).